Here is a 406-residue protein sequence, read N- to C-terminus: Elongation factor Tu-B (406 aa).

Residues 10–215 (KPHVNVGTIG…AIDEYIPTPV (206 aa)) enclose the tr-type G domain. The segment at 19–26 (GHVDHGKT) is G1. 19 to 26 (GHVDHGKT) is a GTP binding site. Threonine 26 is a Mg(2+) binding site. A G2 region spans residues 61–65 (GITIN). The G3 stretch occupies residues 82-85 (DCPG). Residues 82-86 (DCPGH) and 137-140 (NKVD) each bind GTP. Residues 137-140 (NKVD) are G4. The interval 175-177 (SAL) is G5. Threonine 395 carries the post-translational modification Phosphothreonine.

It belongs to the TRAFAC class translation factor GTPase superfamily. Classic translation factor GTPase family. EF-Tu/EF-1A subfamily. As to quaternary structure, monomer. Phosphorylated on a threonine.

It is found in the cytoplasm. The enzyme catalyses GTP + H2O = GDP + phosphate + H(+). GTP hydrolase that promotes the GTP-dependent binding of aminoacyl-tRNA to the A-site of ribosomes during protein biosynthesis. Its function is as follows. Protects glycyl-tRNA(Gly) from hydrolysis by E.coli D-aminoacyl-tRNA deacylase (dtd). This Thermus thermophilus (strain ATCC 27634 / DSM 579 / HB8) protein is Elongation factor Tu-B.